Here is an 878-residue protein sequence, read N- to C-terminus: Probable glucan endo-1,3-beta-glucosidase ARB_02077 (878 aa).

Residues 1–27 form the signal peptide; the sequence is MARGLVSSLLLGQLLLVLVGLFSPAGA. 4 N-linked (GlcNAc...) asparagine glycosylation sites follow: Asn228, Asn257, Asn290, and Asn297. Positions 373 to 472 are disordered; sequence AGSGSKAKRL…TACPSAPVTK (100 aa). The span at 400 to 416 shows a compositional bias: pro residues; that stretch reads APAPQPPAQSTAPPYPI. The span at 433–452 shows a compositional bias: low complexity; it reads VPTRVPTGGVPSGTTGTAPS. Residues Asn505, Asn659, Asn795, and Asn862 are each glycosylated (N-linked (GlcNAc...) asparagine).

The protein belongs to the glycosyl hydrolase 55 family.

It is found in the secreted. It catalyses the reaction Hydrolysis of (1-&gt;3)-beta-D-glucosidic linkages in (1-&gt;3)-beta-D-glucans.. In terms of biological role, probable glucan endo-1,3-beta-glucosidase involved in the hydrolysis of fungal cell wall. Classified as a small-oligosaccharide-producing type based its the end products: glucose, laminaribiose or laminaritetraose. The polypeptide is Probable glucan endo-1,3-beta-glucosidase ARB_02077 (Arthroderma benhamiae (strain ATCC MYA-4681 / CBS 112371) (Trichophyton mentagrophytes)).